The primary structure comprises 716 residues: Iron-sulfur clusters transporter atm1, mitochondrial (716 aa).

A mitochondrion-targeting transit peptide spans 1–18; sequence MAPSIKLSTMATSLHRAH. Residues 19–123 lie on the Mitochondrial matrix side of the membrane; it reads GTSALLRRPR…PKGSWGDKAR (105 aa). Residues 57-87 form a disordered region; the sequence is LFAPNGSAKDESKPAVSTVPKTTGRGPSDPL. A helical membrane pass occupies residues 124-145; it reads VLLAIGLLVGGKVLNVQVPFYF. The region spanning 124 to 414 is the ABC transmembrane type-1 domain; the sequence is VLLAIGLLVG…LGSVYRELRQ (291 aa). At 146–168 the chain is on the mitochondrial intermembrane side; the sequence is REIVDSLNIDFSTTGGSVTAVAG. A helical transmembrane segment spans residues 169–192; it reads AMILGYGAARVGAVVSQELRNAVF. Over 193–241 the chain is Mitochondrial matrix; sequence ASVAQKAIRKVARNTFEHLLNLDLSFHLSKQTGGLTRAIDRGTKGISFL. Residues 242–265 traverse the membrane as a helical segment; it reads LTSMVFHIVPTALEISMVCGILTY. A topological domain (mitochondrial intermembrane) is located at residue Asn-266. The chain crosses the membrane as a helical span at residues 267–287; sequence FGWQYAALTALTMVSYTAFTI. At 288 to 353 the chain is on the mitochondrial matrix side; that stretch reads LTTAWRTKFR…NSIKVATSLA (66 aa). Glutathione contacts are provided by residues 293 to 297 and 356 to 359; these read RTKFR and NSGQ. A helical transmembrane segment spans residues 354 to 372; it reads FLNSGQNIIFSSALTVMMY. The Mitochondrial intermembrane segment spans residues 373–387; it reads MGAHGVATGQLTVGD. Residues 388 to 409 form a helical membrane-spanning segment; the sequence is LVLINQLVFQLSVPLNFLGSVY. Residue Gly-406 participates in glutathione binding. The Mitochondrial matrix portion of the chain corresponds to 410–716; that stretch reads RELRQSLLDM…KEEVGEKKEA (307 aa). The ABC transporter domain maps to 449 to 690; that stretch reads IEFKDVTFGY…NGVYAQLWRA (242 aa). ATP-binding positions include Tyr-458 and 482–493; that span reads GPSGCGKSTLLR. The disordered stretch occupies residues 697 to 716; sequence EEGEVSKKGEKEEVGEKKEA. The span at 700–716 shows a compositional bias: basic and acidic residues; the sequence is EVSKKGEKEEVGEKKEA.

Belongs to the ABC transporter superfamily. ABCB family. Heavy Metal importer (TC 3.A.1.210) subfamily. Homodimer.

Its subcellular location is the mitochondrion inner membrane. Performs an essential function in the generation of cytoplasmic iron-sulfur proteins by mediating the ATP-dependent export of Fe/S cluster precursors synthesized by egt-3 and other mitochondrial proteins. Hydrolyzes ATP. Binds glutathione and may function by transporting a glutathione-conjugated iron-sulfur compound. In Neurospora crassa (strain ATCC 24698 / 74-OR23-1A / CBS 708.71 / DSM 1257 / FGSC 987), this protein is Iron-sulfur clusters transporter atm1, mitochondrial.